The chain runs to 127 residues: Large ribosomal subunit protein bL17 (127 aa).

This sequence belongs to the bacterial ribosomal protein bL17 family. As to quaternary structure, part of the 50S ribosomal subunit. Contacts protein L32.

The chain is Large ribosomal subunit protein bL17 from Lacticaseibacillus casei (strain BL23) (Lactobacillus casei).